We begin with the raw amino-acid sequence, 642 residues long: 1-deoxy-D-xylulose-5-phosphate synthase 2 (642 aa).

Thiamine diphosphate contacts are provided by residues histidine 79 and 120-122 (AHS). Aspartate 155 lines the Mg(2+) pocket. Residues 156 to 157 (GS), asparagine 184, tyrosine 293, and glutamate 375 each bind thiamine diphosphate. Asparagine 184 is a Mg(2+) binding site.

It belongs to the transketolase family. DXPS subfamily. As to quaternary structure, homodimer. Requires Mg(2+) as cofactor. The cofactor is thiamine diphosphate.

The catalysed reaction is D-glyceraldehyde 3-phosphate + pyruvate + H(+) = 1-deoxy-D-xylulose 5-phosphate + CO2. It functions in the pathway metabolic intermediate biosynthesis; 1-deoxy-D-xylulose 5-phosphate biosynthesis; 1-deoxy-D-xylulose 5-phosphate from D-glyceraldehyde 3-phosphate and pyruvate: step 1/1. Functionally, catalyzes the acyloin condensation reaction between C atoms 2 and 3 of pyruvate and glyceraldehyde 3-phosphate to yield 1-deoxy-D-xylulose-5-phosphate (DXP). The sequence is that of 1-deoxy-D-xylulose-5-phosphate synthase 2 from Roseobacter denitrificans (strain ATCC 33942 / OCh 114) (Erythrobacter sp. (strain OCh 114)).